The primary structure comprises 281 residues: Aspartate/glutamate leucyltransferase (281 aa).

The protein belongs to the R-transferase family. Bpt subfamily.

Its subcellular location is the cytoplasm. The enzyme catalyses N-terminal L-glutamyl-[protein] + L-leucyl-tRNA(Leu) = N-terminal L-leucyl-L-glutamyl-[protein] + tRNA(Leu) + H(+). The catalysed reaction is N-terminal L-aspartyl-[protein] + L-leucyl-tRNA(Leu) = N-terminal L-leucyl-L-aspartyl-[protein] + tRNA(Leu) + H(+). Functions in the N-end rule pathway of protein degradation where it conjugates Leu from its aminoacyl-tRNA to the N-termini of proteins containing an N-terminal aspartate or glutamate. The sequence is that of Aspartate/glutamate leucyltransferase from Paracoccus denitrificans (strain Pd 1222).